A 281-amino-acid chain; its full sequence is sn-glycerol-3-phosphate transport system permease protein UgpE (281 aa).

The next 6 helical transmembrane spans lie at 16–36 (LILG…AATL), 85–105 (FSIT…IVWF), 113–133 (FFWM…FPTV), 142–162 (LNSY…TFLF), 202–222 (ALFV…LLII), and 247–267 (WNQV…IVLA). One can recognise an ABC transmembrane type-1 domain in the interval 77–268 (MLNSFIMAFS…IPPVVIVLAM (192 aa)).

It belongs to the binding-protein-dependent transport system permease family. UgpAE subfamily. In terms of assembly, the complex is composed of two ATP-binding proteins (UgpC), two transmembrane proteins (UgpA and UgpE) and a solute-binding protein (UgpB).

The protein localises to the cell inner membrane. In terms of biological role, part of the ABC transporter complex UgpBAEC involved in sn-glycerol-3-phosphate (G3P) import. Probably responsible for the translocation of the substrate across the membrane. This is sn-glycerol-3-phosphate transport system permease protein UgpE (ugpE) from Salmonella typhi.